The chain runs to 484 residues: Acid alpha-amylase (484 aa).

N-linked (GlcNAc...) asparagine glycosylation occurs at Asn24. The cysteines at positions 30 and 38 are disulfide-linked. Trp83 contributes to the substrate binding site. Ca(2+) is bound at residue Asp121. Residue His122 participates in substrate binding. An intrachain disulfide couples Cys150 to Cys164. Asn157 is a glycosylation site (N-linked (GlcNAc...) asparagine). 2 residues coordinate Ca(2+): Glu162 and Asp175. An N-linked (GlcNAc...) asparagine glycan is attached at Asn197. A substrate-binding site is contributed by Arg204. Ca(2+) is bound by residues Asp206, Glu210, and Glu230. Residue Asp206 is the Nucleophile of the active site. 209-210 (LE) is a substrate binding site. Catalysis depends on Glu230, which acts as the Proton donor. Gly234 contributes to the substrate binding site. An intrachain disulfide couples Cys240 to Cys283. Residues Asp297 and Arg344 each coordinate substrate. Cys440 and Cys475 are oxidised to a cystine.

Belongs to the glycosyl hydrolase 13 family. As to quaternary structure, monomer. Ca(2+) is required as a cofactor.

Its subcellular location is the secreted. The catalysed reaction is Endohydrolysis of (1-&gt;4)-alpha-D-glucosidic linkages in polysaccharides containing three or more (1-&gt;4)-alpha-linked D-glucose units.. This chain is Acid alpha-amylase, found in Aspergillus niger.